Reading from the N-terminus, the 199-residue chain is Large ribosomal subunit protein uL4 (199 aa).

It belongs to the universal ribosomal protein uL4 family. Part of the 50S ribosomal subunit.

In terms of biological role, one of the primary rRNA binding proteins, this protein initially binds near the 5'-end of the 23S rRNA. It is important during the early stages of 50S assembly. It makes multiple contacts with different domains of the 23S rRNA in the assembled 50S subunit and ribosome. Its function is as follows. Forms part of the polypeptide exit tunnel. This Aquifex aeolicus (strain VF5) protein is Large ribosomal subunit protein uL4.